Reading from the N-terminus, the 185-residue chain is Protein N-terminal glutamine amidohydrolase (185 aa).

Residues cysteine 14, histidine 62, and aspartate 78 contribute to the active site.

Belongs to the NTAQ1 family. As to quaternary structure, monomer.

The enzyme catalyses N-terminal L-glutaminyl-[protein] + H2O = N-terminal L-glutamyl-[protein] + NH4(+). Its function is as follows. Mediates the side-chain deamidation of N-terminal glutamine residues to glutamate, an important step in N-end rule pathway of protein degradation. Conversion of the resulting N-terminal glutamine to glutamate renders the protein susceptible to arginylation, polyubiquitination and degradation as specified by the N-end rule. Does not act on substrates with internal or C-terminal glutamine and does not act on non-glutamine residues in any position. The chain is Protein N-terminal glutamine amidohydrolase from Caenorhabditis briggsae.